Reading from the N-terminus, the 393-residue chain is Lysine/ornithine decarboxylase (393 aa).

Position 51 is an N6-(pyridoxal phosphate)lysine (K51). Catalysis depends on C323, which acts as the Proton donor; shared with dimeric partner.

This sequence belongs to the Orn/Lys/Arg decarboxylase class-II family. As to quaternary structure, homodimer. Pyridoxal 5'-phosphate is required as a cofactor.

The catalysed reaction is L-lysine + H(+) = cadaverine + CO2. It carries out the reaction L-ornithine + H(+) = putrescine + CO2. Its pathway is amine and polyamine biosynthesis; putrescine biosynthesis via L-ornithine pathway; putrescine from L-ornithine: step 1/1. With respect to regulation, inhibited competitively by both alpha-difluoromethyllysine and alpha-difluoromethylornithine. Functionally, decarboxylates both L-lysine and L-ornithine with similar catalytic efficiency. The protein is Lysine/ornithine decarboxylase (ldc) of Selenomonas ruminantium.